The following is a 273-amino-acid chain: Ribosomal RNA small subunit methyltransferase A (273 aa).

The S-adenosyl-L-methionine site is built by Asn-25, Leu-27, Gly-52, Glu-73, Asp-99, and Asn-118.

The protein belongs to the class I-like SAM-binding methyltransferase superfamily. rRNA adenine N(6)-methyltransferase family. RsmA subfamily.

It is found in the cytoplasm. The catalysed reaction is adenosine(1518)/adenosine(1519) in 16S rRNA + 4 S-adenosyl-L-methionine = N(6)-dimethyladenosine(1518)/N(6)-dimethyladenosine(1519) in 16S rRNA + 4 S-adenosyl-L-homocysteine + 4 H(+). Functionally, specifically dimethylates two adjacent adenosines (A1518 and A1519) in the loop of a conserved hairpin near the 3'-end of 16S rRNA in the 30S particle. May play a critical role in biogenesis of 30S subunits. The protein is Ribosomal RNA small subunit methyltransferase A of Novosphingobium aromaticivorans (strain ATCC 700278 / DSM 12444 / CCUG 56034 / CIP 105152 / NBRC 16084 / F199).